A 335-amino-acid polypeptide reads, in one-letter code: Antigen-presenting glycoprotein CD1d (335 aa).

A signal peptide spans 1 to 19 (MGCLLFLLLWALLQAWGSA). The Extracellular segment spans residues 20-301 (EVPQRLFPLR…VLYWGGSYTS (282 aa)). Residues Asn38 and Asn60 are each glycosylated (N-linked (GlcNAc...) asparagine). Asp98 contacts a D-galactosylceramide. 2 disulfides stabilise this stretch: Cys120-Cys184 and Cys224-Cys279. An N-linked (GlcNAc...) asparagine glycan is attached at Asn126. Position 169–172 (169–172 (DKWT)) interacts with a D-galactosylceramide. Residue Asn181 is glycosylated (N-linked (GlcNAc...) asparagine). An Ig-like domain is found at 185–292 (PQFVSGLLES…HSSLEGQDIV (108 aa)). The chain crosses the membrane as a helical span at residues 302-322 (MGLIALAVLACLLFLLIVGFT). Over 323 to 335 (SRFKRQTSYQGVL) the chain is Cytoplasmic. Positions 331–334 (YQGV) match the Internalization signal motif.

As to quaternary structure, heterodimer with B2M (beta-2-microglobulin). Interacts with MHC II. In terms of tissue distribution, expressed on cortical thymocytes, on certain T-cell leukemias, and in various other tissues.

Its subcellular location is the cell membrane. The protein resides in the basolateral cell membrane. It is found in the endosome membrane. The protein localises to the lysosome membrane. It localises to the endoplasmic reticulum membrane. Its function is as follows. Antigen-presenting protein that binds self and non-self glycolipids and presents them to T-cell receptors on natural killer T-cells. This chain is Antigen-presenting glycoprotein CD1d (CD1D), found in Homo sapiens (Human).